The following is a 162-amino-acid chain: ATP synthase subunit b 1 (162 aa).

The helical transmembrane segment at 1 to 21 threads the bilayer; the sequence is MLLTAEFWVAVAFVAFLVIVW.

This sequence belongs to the ATPase B chain family. F-type ATPases have 2 components, F(1) - the catalytic core - and F(0) - the membrane proton channel. F(1) has five subunits: alpha(3), beta(3), gamma(1), delta(1), epsilon(1). F(0) has three main subunits: a(1), b(2) and c(10-14). The alpha and beta chains form an alternating ring which encloses part of the gamma chain. F(1) is attached to F(0) by a central stalk formed by the gamma and epsilon chains, while a peripheral stalk is formed by the delta and b chains.

It localises to the cell inner membrane. In terms of biological role, f(1)F(0) ATP synthase produces ATP from ADP in the presence of a proton or sodium gradient. F-type ATPases consist of two structural domains, F(1) containing the extramembraneous catalytic core and F(0) containing the membrane proton channel, linked together by a central stalk and a peripheral stalk. During catalysis, ATP synthesis in the catalytic domain of F(1) is coupled via a rotary mechanism of the central stalk subunits to proton translocation. Component of the F(0) channel, it forms part of the peripheral stalk, linking F(1) to F(0). The polypeptide is ATP synthase subunit b 1 (Methylorubrum extorquens (strain PA1) (Methylobacterium extorquens)).